Here is a 2276-residue protein sequence, read N- to C-terminus: Non-reducing polyketide synthase VdtA (2276 aa).

Residues 8-243 are N-terminal acylcarrier protein transacylase (SAT) domain; sequence YLFGDQTYDY…KDIPIHAPYH (236 aa). Residues 372 to 804 form the Ketosynthase family 3 (KS3) domain; it reads RAKIAIVGMS…GGNSSVLVED (433 aa). Residues cysteine 544, histidine 679, and histidine 723 each act as for beta-ketoacyl synthase activity in the active site. The malonyl-CoA:ACP transacylase (MAT) domain stretch occupies residues 905–1206; sequence FTFTGQGAQY…KALPTLQRNR (302 aa). Residue serine 996 is the For acyl/malonyl transferase activity of the active site. Positions 1300 to 1616 are product template (PT) domain; sequence TTTLHRIVDE…PRRVLRYILQ (317 aa). Residues 1304–1438 form an N-terminal hotdog fold region; that stretch reads HRIVDEKSTE…CRIKFSDRST (135 aa). The PKS/mFAS DH domain maps to 1304–1612; that stretch reads HRIVDEKSTE…IQGVPRRVLR (309 aa). The active-site Proton acceptor; for dehydratase activity is the histidine 1336. The interval 1465–1612 is C-terminal hotdog fold; that stretch reads TYRFNGPMAY…IQGVPRRVLR (148 aa). Catalysis depends on aspartate 1525, which acts as the Proton donor; for dehydratase activity. The 75-residue stretch at 1655–1729 folds into the Carrier 1 domain; the sequence is SGTLTEALRI…DLKRFFDKIN (75 aa). An O-(pantetheine 4'-phosphoryl)serine modification is found at serine 1689. A disordered region spans residues 1735-1762; sequence APAPVSDAPKQLQPSSSPVASATPSAPI. The segment covering 1748 to 1761 has biased composition (low complexity); sequence PSSSPVASATPSAP. A Carrier 2 domain is found at 1765-1839; the sequence is RSKFESVLNI…DLKAHFMSKN (75 aa). At serine 1799 the chain carries O-(pantetheine 4'-phosphoryl)serine. Residues 1840–1854 are compositionally biased toward polar residues; sequence SDNGSSAVLTPQPSR. The segment at 1840 to 1882 is disordered; that stretch reads SDNGSSAVLTPQPSRDSALPERTRPRVADTSDEEDAPVSANEF. Positions 1857 to 1868 are enriched in basic and acidic residues; sequence ALPERTRPRVAD. Residues 1886-1964 enclose the Carrier 3 domain; sequence ARSTSKYMAV…GLRSFFGFES (79 aa). Serine 1923 is modified (O-(pantetheine 4'-phosphoryl)serine). The disordered stretch occupies residues 1967–1993; the sequence is TATNPTASQSSSSISSGTSVFDTSPSP. Positions 1969–1990 are enriched in low complexity; the sequence is TNPTASQSSSSISSGTSVFDTS. The interval 2020–2271 is thioesterase (TE) domain; that stretch reads PLPPATSVTL…GADHFSLLVS (252 aa).

The protein localises to the cytoplasmic vesicle. It carries out the reaction 7 malonyl-CoA + acetyl-CoA + 7 H(+) = 7,9,10-trihydroxy-3-(2-oxopropyl)-1H-benzo[g]isochromen-1-one + 7 CO2 + 8 CoA + 2 H2O. It participates in secondary metabolite biosynthesis. Its function is as follows. Non-reducing polyketide synthase; part of the gene cluster that mediates the biosynthesis of viriditoxin, one of the 'classical' secondary metabolites produced by fungi and that has antibacterial activity. The first step is performed by the polyketide synthase VdtA which condenses one acetyl-CoA and 6 malonyl-CoA units to form the heptaketide monomer backbone of viriditoxin. The product of VdtA is then O-methylated on C7 by the O-methyltransferase VdtC. The O-methyl group is important for the stereoselective coupling of the monomers at the final step of viriditoxin biosynthesis. The short-chain dehydrogenase/reductase VdtF then acts as a stereospecific reductase converting the pyrone to dihydropyrone via the reduction of the C3-C4 double bond. The FAD-binding monooxygenase VdtE then converts the ketone group into a methyl-ester group to yield semi-viriditoxin. Finally, the laccase VdtB is involved in dimerization of 2 semi-viriditoxin molecules to yield the final viriditoxin. VdtB is responsible for the regioselective 6,6'-coupling of semi-viriditoxin, which yields (M)-viriditoxin and (P)-viriditoxin at a ratio of 1:2. The non-catalytic carboxylesterase-like protein VdtD affects the stereochemistical outcome of the coupling. The highly reducing polyketide synthase VdtX is not involved in viriditoxin synthesis, but might possibly play a role in the production of additional metabolites not identified yet. The sequence is that of Non-reducing polyketide synthase VdtA from Byssochlamys spectabilis (Paecilomyces variotii).